The primary structure comprises 252 residues: Secreted LysM effector LysM1 (252 aa).

The 45-residue stretch at 20–64 (FAIPGDPGDTCDTLSDRWGITIDIFKSLNPGVNCPNLVANMEYCV) folds into the LysM 1 domain. A disordered region spans residues 71 to 98 (DTPSTTTTAKPTMTPTSTPTKTTTTSTA). Low complexity predominate over residues 72–98 (TPSTTTTAKPTMTPTSTPTKTTTTSTA). 2 consecutive LysM domains span residues 126-172 (KFHL…YVCV) and 204-250 (KFHL…YVCI).

It belongs to the secreted LysM effector family.

It localises to the secreted. It is found in the cell wall. Its function is as follows. Secreted effector that binds two substrates, chitin and N-linked oligosaccharides associated with human skin glycoproteins. Could provide the pathogen with three important functions including shielding host cell wall chitin from the human immune system, shielding the pathogen's glycoproteins from host degradation and immune surveillance, and helping facilitate pathogen adhesion to human skin. This chain is Secreted LysM effector LysM1, found in Trichophyton rubrum (strain ATCC MYA-4607 / CBS 118892) (Athlete's foot fungus).